Reading from the N-terminus, the 341-residue chain is tRNA N6-adenosine threonylcarbamoyltransferase (341 aa).

Fe cation contacts are provided by His120 and His124. Substrate-binding positions include 142 to 146 (VVSGG), Asp175, Gly188, Asp192, and Asn281. Position 310 (Asp310) interacts with Fe cation.

This sequence belongs to the KAE1 / TsaD family. It depends on Fe(2+) as a cofactor.

It localises to the cytoplasm. The catalysed reaction is L-threonylcarbamoyladenylate + adenosine(37) in tRNA = N(6)-L-threonylcarbamoyladenosine(37) in tRNA + AMP + H(+). Functionally, required for the formation of a threonylcarbamoyl group on adenosine at position 37 (t(6)A37) in tRNAs that read codons beginning with adenine. Is involved in the transfer of the threonylcarbamoyl moiety of threonylcarbamoyl-AMP (TC-AMP) to the N6 group of A37, together with TsaE and TsaB. TsaD likely plays a direct catalytic role in this reaction. The chain is tRNA N6-adenosine threonylcarbamoyltransferase from Anoxybacillus flavithermus (strain DSM 21510 / WK1).